The primary structure comprises 348 residues: Large ribosomal subunit protein uL10 (348 aa).

The interval 291 to 348 (LPEELRGVSAADTGAAEEEESTDEEAADADQADAAEDDDAADDDGDDEDAGDALGSLF) is disordered. Residues 305-341 (AAEEEESTDEEAADADQADAAEDDDAADDDGDDEDAG) are compositionally biased toward acidic residues.

It belongs to the universal ribosomal protein uL10 family. As to quaternary structure, part of the 50S ribosomal subunit. Forms part of the ribosomal stalk which helps the ribosome interact with GTP-bound translation factors. Forms a heptameric L10(L12)2(L12)2(L12)2 complex, where L10 forms an elongated spine to which the L12 dimers bind in a sequential fashion.

Its function is as follows. Forms part of the ribosomal stalk, playing a central role in the interaction of the ribosome with GTP-bound translation factors. This Haloferax volcanii (strain ATCC 29605 / DSM 3757 / JCM 8879 / NBRC 14742 / NCIMB 2012 / VKM B-1768 / DS2) (Halobacterium volcanii) protein is Large ribosomal subunit protein uL10.